A 434-amino-acid chain; its full sequence is Trigger factor (434 aa).

Residues 161 to 246 (GKRVSIDFVG…VNKVEARELP (86 aa)) enclose the PPIase FKBP-type domain.

The protein belongs to the FKBP-type PPIase family. Tig subfamily.

Its subcellular location is the cytoplasm. It carries out the reaction [protein]-peptidylproline (omega=180) = [protein]-peptidylproline (omega=0). Its function is as follows. Involved in protein export. Acts as a chaperone by maintaining the newly synthesized protein in an open conformation. Functions as a peptidyl-prolyl cis-trans isomerase. In Vibrio parahaemolyticus serotype O3:K6 (strain RIMD 2210633), this protein is Trigger factor.